The primary structure comprises 367 residues: 2-aminoethylphosphonate--pyruvate transaminase (367 aa).

Residues 65–67 (SGS), tyrosine 92, threonine 143, and aspartate 168 contribute to the pyridoxal 5'-phosphate site. The residue at position 194 (lysine 194) is an N6-(pyridoxal phosphate)lysine. Threonine 243 is a binding site for pyridoxal 5'-phosphate.

This sequence belongs to the class-V pyridoxal-phosphate-dependent aminotransferase family. PhnW subfamily. As to quaternary structure, homodimer. Pyridoxal 5'-phosphate is required as a cofactor.

It carries out the reaction (2-aminoethyl)phosphonate + pyruvate = phosphonoacetaldehyde + L-alanine. Involved in phosphonate degradation. The chain is 2-aminoethylphosphonate--pyruvate transaminase (phnW) from Salmonella typhimurium (strain LT2 / SGSC1412 / ATCC 700720).